The primary structure comprises 76 residues: Kappa-actitoxin-Avd4m (76 aa).

An N-terminal signal peptide occupies residues 1–19 (MNKALFLCLVVLCAAVVFA). Positions 20–31 (AEDLQKAKHAPF) are excised as a propeptide. 3 disulfides stabilise this stretch: Cys37/Cys72, Cys39/Cys65, and Cys55/Cys73.

This sequence belongs to the sea anemone type 3 (BDS) potassium channel toxin family. As to expression, weakly expressed in the ectodermal tissue from the distal and proximal tentacles, body wall, and oral disk.

It localises to the secreted. The protein localises to the nematocyst. In terms of biological role, blocks Kv3 voltage-gated potassium channels. Reduces blood pressure. The sequence is that of Kappa-actitoxin-Avd4m from Anemonia viridis (Snakelocks anemone).